A 181-amino-acid polypeptide reads, in one-letter code: D-lyxose/D-mannose isomerase (181 aa).

Mn(2+) is bound by residues histidine 75, histidine 77, glutamate 88, and histidine 143.

The protein belongs to the D-lyxose ketol-isomerase family. As to quaternary structure, homodimer. It depends on Mn(2+) as a cofactor.

The catalysed reaction is D-lyxose = D-xylulose. It carries out the reaction D-mannose = D-fructose. Its function is as follows. Sugar isomerase that catalyzes the reversible isomerization of D-lyxose to D-xylulose, and D-mannose to D-fructose. Shows optimum activity using D-lyxose as substrate, but can also effectively catalyze the isomerization between D-fructose and D-mannose. This is D-lyxose/D-mannose isomerase from Thermosediminibacter oceani (strain ATCC BAA-1034 / DSM 16646 / JW/IW-1228P).